The following is a 465-amino-acid chain: Kynureninase (465 aa).

Pyridoxal 5'-phosphate-binding positions include Leu133, Thr134, 161 to 164 (FPSD), Ser217, Asp246, His249, and Tyr271. The residue at position 272 (Lys272) is an N6-(pyridoxal phosphate)lysine. Pyridoxal 5'-phosphate-binding residues include Trp302 and Asn330.

It belongs to the kynureninase family. In terms of assembly, homodimer. Requires pyridoxal 5'-phosphate as cofactor.

The protein localises to the cytoplasm. The catalysed reaction is L-kynurenine + H2O = anthranilate + L-alanine + H(+). It catalyses the reaction 3-hydroxy-L-kynurenine + H2O = 3-hydroxyanthranilate + L-alanine + H(+). The protein operates within amino-acid degradation; L-kynurenine degradation; L-alanine and anthranilate from L-kynurenine: step 1/1. It participates in cofactor biosynthesis; NAD(+) biosynthesis; quinolinate from L-kynurenine: step 2/3. Functionally, catalyzes the cleavage of L-kynurenine (L-Kyn) and L-3-hydroxykynurenine (L-3OHKyn) into anthranilic acid (AA) and 3-hydroxyanthranilic acid (3-OHAA), respectively. In Nematostella vectensis (Starlet sea anemone), this protein is Kynureninase.